Reading from the N-terminus, the 183-residue chain is Protein Syd (183 aa).

The protein belongs to the Syd family.

The protein localises to the cell inner membrane. Functionally, interacts with the SecY protein in vivo. May bind preferentially to an uncomplexed state of SecY, thus functioning either as a chelating agent for excess SecY in the cell or as a regulatory factor that negatively controls the translocase function. The chain is Protein Syd from Aliivibrio fischeri (strain MJ11) (Vibrio fischeri).